The sequence spans 631 residues: MSATKLTRREQRAQAQHFIDTLEGSAFPNSKRIYITGTQPGVRVPMREIQLSPTLIGGSKEQPQYEENEAIPVYDTSGPYGDPQIAINVQQGLAKLRQPWIDARGDTEELTVRSSDYTKARLADDGLDELRFSGVLTPKRAKAGRRVTQLHYARKGIITPEMEFIAIRENMGRERIRSEVLRHQHPGMSFGARLPENITAEFVRDEVAAGRAIIPANINHPESEPMIIGRNFLVKVNANIGNSAVTSSIEEEVEKLVWSTRWGADTVMDLSTGRYIHETREWILRNSPVPIGTVPIYQALEKVNGIAEDLTWEAFRDTLLEQAEQGVDYFTIHAGVLLRYVPMTAKRLTGIVSRGGSIMAKWCLSHHQENFLYQHFREICEICAAYDVSLSLGDGLRPGSIQDANDEAQFAELHTLGELTKIAWEYDVQVMIEGPGHVPMQMIRRNMTEELEHCHEAPFYTLGPLTTDIAPGYDHFTSGIGAAMIGWFGCAMLCYVTPKEHLGLPNKEDVKQGLITYKIAAHAADLAKGHPGAQIRDNAMSKARFEFRWEDQFNLALDPFTARAYHDETLPQESGKVAHFCSMCGPKFCSMKISQEVRDYAAAQTIEVGMADMSENFRARGGEIYLRKEEA.

Substrate contacts are provided by residues N239, M268, Y297, H333, 353-355 (SRG), 394-397 (DGLR), and E433. H437 contacts Zn(2+). Y460 provides a ligand contact to substrate. Residue H501 participates in Zn(2+) binding. 3 residues coordinate [4Fe-4S] cluster: C581, C584, and C589.

Belongs to the ThiC family. As to quaternary structure, homodimer. [4Fe-4S] cluster serves as cofactor.

It carries out the reaction 5-amino-1-(5-phospho-beta-D-ribosyl)imidazole + S-adenosyl-L-methionine = 4-amino-2-methyl-5-(phosphooxymethyl)pyrimidine + CO + 5'-deoxyadenosine + formate + L-methionine + 3 H(+). Its pathway is cofactor biosynthesis; thiamine diphosphate biosynthesis. In terms of biological role, catalyzes the synthesis of the hydroxymethylpyrimidine phosphate (HMP-P) moiety of thiamine from aminoimidazole ribotide (AIR) in a radical S-adenosyl-L-methionine (SAM)-dependent reaction. This is Phosphomethylpyrimidine synthase from Escherichia coli O127:H6 (strain E2348/69 / EPEC).